The following is a 194-amino-acid chain: Putative L,D-transpeptidase YciB (194 aa).

The N-terminal stretch at 1 to 19 is a signal peptide; that stretch reads MKLSLFIIAVLMPVILLSA. A lipid anchor (N-palmitoyl cysteine) is attached at Cys20. The S-diacylglycerol cysteine moiety is linked to residue Cys20. In terms of domain architecture, L,D-TPase catalytic spans 68 to 194; the sequence is VWIDVNVKEQ…IPEHTKVVIS (127 aa). His144 serves as the catalytic Proton donor/acceptor. The active-site Nucleophile is Cys170.

Belongs to the YkuD family.

It localises to the cell membrane. It participates in cell wall biogenesis; peptidoglycan biosynthesis. This Bacillus subtilis (strain 168) protein is Putative L,D-transpeptidase YciB (yciB).